We begin with the raw amino-acid sequence, 75 residues long: Transaldolase (75 aa).

This sequence belongs to the transaldolase family. Type 1 subfamily. Homodimer. Post-translationally, phosphorylated. Predominantly expressed in Y-organs.

The protein localises to the cytoplasm. The enzyme catalyses D-sedoheptulose 7-phosphate + D-glyceraldehyde 3-phosphate = D-erythrose 4-phosphate + beta-D-fructose 6-phosphate. The protein operates within carbohydrate degradation; pentose phosphate pathway; D-glyceraldehyde 3-phosphate and beta-D-fructose 6-phosphate from D-ribose 5-phosphate and D-xylulose 5-phosphate (non-oxidative stage): step 2/3. Functionally, transaldolase is important for the balance of metabolites in the pentose-phosphate pathway. May play a role in the conversion of sterols into ecdysteroids via NADPH. In Carcinus maenas (Common shore crab), this protein is Transaldolase.